Consider the following 525-residue polypeptide: Peptide chain release factor 3 (525 aa).

Residues 9 to 276 (AKRRTFAIIS…GFTTYAPEPQ (268 aa)) form the tr-type G domain. Residues 18–25 (SHPDAGKT), 86–90 (DTPGH), and 140–143 (NKFD) contribute to the GTP site.

Belongs to the TRAFAC class translation factor GTPase superfamily. Classic translation factor GTPase family. PrfC subfamily.

Its subcellular location is the cytoplasm. Functionally, increases the formation of ribosomal termination complexes and stimulates activities of RF-1 and RF-2. It binds guanine nucleotides and has strong preference for UGA stop codons. It may interact directly with the ribosome. The stimulation of RF-1 and RF-2 is significantly reduced by GTP and GDP, but not by GMP. This chain is Peptide chain release factor 3, found in Francisella philomiragia subsp. philomiragia (strain ATCC 25017 / CCUG 19701 / FSC 153 / O#319-036).